The chain runs to 79 residues: UPF0175 protein APE_0890a.1 (79 aa).

The protein belongs to the UPF0175 family.

The sequence is that of UPF0175 protein APE_0890a.1 from Aeropyrum pernix (strain ATCC 700893 / DSM 11879 / JCM 9820 / NBRC 100138 / K1).